The following is a 479-amino-acid chain: 6-phosphogluconate dehydrogenase, decarboxylating (479 aa).

NADP(+) is bound by residues 10-15, 33-35, 75-77, and asparagine 103; these read GLAVMG, NRS, and IKA. Substrate contacts are provided by residues asparagine 103 and 129-131; that span reads SGG. Catalysis depends on lysine 183, which acts as the Proton acceptor. Position 186–187 (186–187) interacts with substrate; that stretch reads HN. The active-site Proton donor is the glutamate 190. Positions 191, 260, 287, 447, and 453 each coordinate substrate.

It belongs to the 6-phosphogluconate dehydrogenase family. As to quaternary structure, homodimer.

It carries out the reaction 6-phospho-D-gluconate + NADP(+) = D-ribulose 5-phosphate + CO2 + NADPH. Its pathway is carbohydrate degradation; pentose phosphate pathway; D-ribulose 5-phosphate from D-glucose 6-phosphate (oxidative stage): step 3/3. In terms of biological role, catalyzes the oxidative decarboxylation of 6-phosphogluconate to ribulose 5-phosphate and CO(2), with concomitant reduction of NADP to NADPH. This chain is 6-phosphogluconate dehydrogenase, decarboxylating (gnd), found in Chlamydia muridarum (strain MoPn / Nigg).